Reading from the N-terminus, the 136-residue chain is Small ribosomal subunit protein eS8 (136 aa).

Belongs to the eukaryotic ribosomal protein eS8 family. Part of the 30S ribosomal subunit.

The chain is Small ribosomal subunit protein eS8 (rps8e) from Aeropyrum pernix (strain ATCC 700893 / DSM 11879 / JCM 9820 / NBRC 100138 / K1).